Consider the following 230-residue polypeptide: Uracil-DNA glycosylase (230 aa).

Residue Asp70 is the Proton acceptor of the active site.

This sequence belongs to the uracil-DNA glycosylase (UDG) superfamily. UNG family.

Its subcellular location is the cytoplasm. It carries out the reaction Hydrolyzes single-stranded DNA or mismatched double-stranded DNA and polynucleotides, releasing free uracil.. Functionally, excises uracil residues from the DNA which can arise as a result of misincorporation of dUMP residues by DNA polymerase or due to deamination of cytosine. The polypeptide is Uracil-DNA glycosylase (Pseudomonas fluorescens (strain ATCC BAA-477 / NRRL B-23932 / Pf-5)).